A 620-amino-acid chain; its full sequence is Guanylate cyclase soluble subunit beta-1 (620 aa).

His-105 contributes to the heme binding site. The region spanning 421-554 (TILFSGIVGF…NTVNLTSRTE (134 aa)) is the Guanylate cyclase domain.

The protein belongs to the adenylyl cyclase class-4/guanylyl cyclase family. In terms of assembly, the active enzyme is formed by a heterodimer of an alpha and a beta subunit. Heterodimer with GUCY1A1. Can also form inactive homodimers in vitro. It depends on heme as a cofactor.

Its subcellular location is the cytoplasm. It catalyses the reaction GTP = 3',5'-cyclic GMP + diphosphate. Activated by nitric oxide in the presence of magnesium or manganese ions. In terms of biological role, mediates responses to nitric oxide (NO) by catalyzing the biosynthesis of the signaling molecule cGMP. This chain is Guanylate cyclase soluble subunit beta-1 (Gucy1b1), found in Mus musculus (Mouse).